The chain runs to 158 residues: Ribosome-binding factor A (158 aa).

The disordered stretch occupies residues 114–158 (AKDAEVRQVSTGAQYAGDADPYRKPEDEDEETDGSSEKNEGPASA). The span at 148–158 (SSEKNEGPASA) shows a compositional bias: basic and acidic residues.

This sequence belongs to the RbfA family. As to quaternary structure, monomer. Binds 30S ribosomal subunits, but not 50S ribosomal subunits or 70S ribosomes.

The protein resides in the cytoplasm. Its function is as follows. One of several proteins that assist in the late maturation steps of the functional core of the 30S ribosomal subunit. Associates with free 30S ribosomal subunits (but not with 30S subunits that are part of 70S ribosomes or polysomes). Required for efficient processing of 16S rRNA. May interact with the 5'-terminal helix region of 16S rRNA. In Streptomyces griseus subsp. griseus (strain JCM 4626 / CBS 651.72 / NBRC 13350 / KCC S-0626 / ISP 5235), this protein is Ribosome-binding factor A.